Consider the following 371-residue polypeptide: Histidinol-phosphate aminotransferase (371 aa).

Lys228 is modified (N6-(pyridoxal phosphate)lysine).

It belongs to the class-II pyridoxal-phosphate-dependent aminotransferase family. Histidinol-phosphate aminotransferase subfamily. Pyridoxal 5'-phosphate is required as a cofactor.

The catalysed reaction is L-histidinol phosphate + 2-oxoglutarate = 3-(imidazol-4-yl)-2-oxopropyl phosphate + L-glutamate. It functions in the pathway amino-acid biosynthesis; L-histidine biosynthesis; L-histidine from 5-phospho-alpha-D-ribose 1-diphosphate: step 7/9. The chain is Histidinol-phosphate aminotransferase from Methanococcus maripaludis (strain C6 / ATCC BAA-1332).